A 394-amino-acid chain; its full sequence is DNA repair protein brc-2 (394 aa).

Positions 1 to 12 (MGDSSKKVKDSF) are enriched in basic and acidic residues. Disordered stretches follow at residues 1–30 (MGDSSKKVKDSFDTISEPDSFDEPKGVPIS) and 56–136 (MLNS…EKKK). The tract at residues 1–60 (MGDSSKKVKDSFDTISEPDSFDEPKGVPISMEPVFSTAAGIRIDVKQESIDKSKKMLNSD) is interaction with rad-51. Residues 28-62 (PISMEPVFSTAAGIRIDVKQESIDKSKKMLNSDLK) form a BRCA2 repeat-like region region. Residues 56-73 (MLNSDLKSKSSSKGGFSS) show a composition bias toward low complexity. The interval 60–89 (DLKSKSSSKGGFSSPLVRKNNGSSAFVSPF) is interaction with rad-51-DNA complexes. The span at 124–134 (KKSKKHSKKEK) shows a compositional bias: basic residues. A required for ssDNA binding region spans residues 371-389 (WKDFGSYLKHKEDKKKRRS).

As to quaternary structure, interacts (via N-terminus) with rad-51; regulates rad-51 recruitment to sites of DNA double strand breaks. Expressed in the germline, with highest expression in cells undergoing oogenesis.

It is found in the nucleus. The protein localises to the chromosome. Required for the homologous recombination repair of DNA double strand breaks, thereby playing a role in chromosome integrity. Acts by targeting rad-51 to sites of DNA damage and stabilizing rad-51-DNA filaments by blocking ATP hydrolysis catalyzed by rad-51. Promotes rad-51 mediated displacement-loop (D-loop) formation during strand invasion between the invading single-stranded DNA (ssDNA) and the homologous duplex DNA. Also functions independently of rad-51 in DNA double-strand break (DSB) repair by promoting DNA single-strand annealing (SSA) when the homologous recombination (HR) and non-homologous end joining (NHEJ) pathways are compromised. Binds selectively to single-stranded (ssDNA) via its C-terminus. Involved in telomere maintenance and replicative senescence. This Caenorhabditis elegans protein is DNA repair protein brc-2.